We begin with the raw amino-acid sequence, 471 residues long: GPI mannosyltransferase 2 (471 aa).

The next 8 membrane-spanning stretches (helical) occupy residues 23 to 43 (LTSF…STLV), 135 to 155 (VAEA…SALV), 169 to 189 (LSLV…LSAP), 190 to 210 (YSES…ALGC), 227 to 247 (LYTI…SNGL), 277 to 297 (LAAL…PQAA), 348 to 368 (YWTL…VILV), and 449 to 469 (IVMF…SFLP).

Belongs to the PIGV family.

It localises to the endoplasmic reticulum membrane. It participates in glycolipid biosynthesis; glycosylphosphatidylinositol-anchor biosynthesis. Its function is as follows. Mannosyltransferase involved in glycosylphosphatidylinositol-anchor biosynthesis. Transfers the second mannose to the glycosylphosphatidylinositol during GPI precursor assembly. The protein is GPI mannosyltransferase 2 (GPI18) of Chaetomium globosum (strain ATCC 6205 / CBS 148.51 / DSM 1962 / NBRC 6347 / NRRL 1970) (Soil fungus).